Consider the following 230-residue polypeptide: Large ribosomal subunit protein uL1c (230 aa).

The protein belongs to the universal ribosomal protein uL1 family. As to quaternary structure, part of the 50S ribosomal subunit.

It is found in the plastid. Its subcellular location is the chloroplast. In terms of biological role, binds directly to 23S rRNA. Might be involved in E site tRNA release (Potential). The polypeptide is Large ribosomal subunit protein uL1c (rpl1) (Thalassiosira pseudonana (Marine diatom)).